Here is a 284-residue protein sequence, read N- to C-terminus: 4-diphosphocytidyl-2-C-methyl-D-erythritol kinase (284 aa).

Lys14 is a catalytic residue. 98–108 (PMGGGLGGGSS) is a binding site for ATP. Asp140 is an active-site residue.

The protein belongs to the GHMP kinase family. IspE subfamily.

It carries out the reaction 4-CDP-2-C-methyl-D-erythritol + ATP = 4-CDP-2-C-methyl-D-erythritol 2-phosphate + ADP + H(+). Its pathway is isoprenoid biosynthesis; isopentenyl diphosphate biosynthesis via DXP pathway; isopentenyl diphosphate from 1-deoxy-D-xylulose 5-phosphate: step 3/6. Its function is as follows. Catalyzes the phosphorylation of the position 2 hydroxy group of 4-diphosphocytidyl-2C-methyl-D-erythritol. This Shewanella sp. (strain MR-4) protein is 4-diphosphocytidyl-2-C-methyl-D-erythritol kinase.